Reading from the N-terminus, the 144-residue chain is MRLNSLSPAEGAKHSAKRLGRGISSGLGKTGGRGHKGQKSRTGGGVRRGFEGGQMPLYRRLPKFGFTSLKSFHVAEIRLNDLAKVDGNEVTLESLKAANVITKDILSVKVILAGKIEKAVVVKGLGVTKGAKAAIEAAGGSIEE.

A disordered region spans residues 1–52 (MRLNSLSPAEGAKHSAKRLGRGISSGLGKTGGRGHKGQKSRTGGGVRRGFEG).

This sequence belongs to the universal ribosomal protein uL15 family. In terms of assembly, part of the 50S ribosomal subunit.

Its function is as follows. Binds to the 23S rRNA. The sequence is that of Large ribosomal subunit protein uL15 from Actinobacillus pleuropneumoniae serotype 7 (strain AP76).